We begin with the raw amino-acid sequence, 208 residues long: Small ribosomal subunit protein uS4 (208 aa).

The disordered stretch occupies residues 31–51 (SALDKRAYGPGQHGQRRAKTS). The 59-residue stretch at 98–156 (RRLDNVVYRMGFATTRSSARQLVTHGHVLVDGKRLDIPSYFVRSGQKIEIKEKTKSNPQ) folds into the S4 RNA-binding domain.

This sequence belongs to the universal ribosomal protein uS4 family. As to quaternary structure, part of the 30S ribosomal subunit. Contacts protein S5. The interaction surface between S4 and S5 is involved in control of translational fidelity.

In terms of biological role, one of the primary rRNA binding proteins, it binds directly to 16S rRNA where it nucleates assembly of the body of the 30S subunit. With S5 and S12 plays an important role in translational accuracy. This is Small ribosomal subunit protein uS4 from Helicobacter pylori (strain HPAG1).